Here is a 207-residue protein sequence, read N- to C-terminus: Ion-translocating oxidoreductase complex subunit G (207 aa).

Residues 11–31 (GILLGFIALLCTIISTGIFFL) form a helical membrane-spanning segment. Position 175 is an FMN phosphoryl threonine (Thr175).

This sequence belongs to the RnfG family. In terms of assembly, the complex is composed of six subunits: RnfA, RnfB, RnfC, RnfD, RnfE and RnfG. FMN serves as cofactor.

The protein resides in the cell inner membrane. Its function is as follows. Part of a membrane-bound complex that couples electron transfer with translocation of ions across the membrane. This chain is Ion-translocating oxidoreductase complex subunit G, found in Haemophilus influenzae (strain 86-028NP).